The sequence spans 205 residues: Thymidylate kinase (205 aa).

ATP is bound at residue 9 to 16; it reads GPEGSGKT.

This sequence belongs to the thymidylate kinase family.

It catalyses the reaction dTMP + ATP = dTDP + ADP. Functionally, phosphorylation of dTMP to form dTDP in both de novo and salvage pathways of dTTP synthesis. The polypeptide is Thymidylate kinase (Staphylococcus aureus (strain MSSA476)).